The sequence spans 562 residues: ATP-dependent RNA helicase dbp2 (562 aa).

Positions 132–160 match the Q motif motif; it reads ETFDEAGFPRYVMDEVKAQGFPAPTAIQS. Residues 163–338 form the Helicase ATP-binding domain; it reads WPMALSGRDV…ADFLTDFIQV (176 aa). 176–183 provides a ligand contact to ATP; that stretch reads AETGSGKT. Positions 286 to 289 match the DEAD box motif; that stretch reads DEAD. The region spanning 370 to 515 is the Helicase C-terminal domain; sequence HLEKIMEGRE…QIDPRLAEMA (146 aa). The tract at residues 526-548 is RNA-binding RGG-box; that stretch reads GGYRGRGGGGWRGGRGGGGGGGS. The segment covering 536-550 has biased composition (gly residues); it reads WRGGRGGGGGGGSVG. Residues 536 to 562 form a disordered region; it reads WRGGRGGGGGGGSVGGANALPLNNRRW.

It belongs to the DEAD box helicase family. DDX5/DBP2 subfamily. In terms of assembly, associates with polysomes.

It localises to the cytoplasm. Its subcellular location is the nucleus. The enzyme catalyses ATP + H2O = ADP + phosphate + H(+). Functionally, ATP-dependent RNA helicase involved nonsense-mediated mRNA decay and ribosome biogenesis through rRNA processing. This chain is ATP-dependent RNA helicase dbp2 (drh-1), found in Neurospora crassa (strain ATCC 24698 / 74-OR23-1A / CBS 708.71 / DSM 1257 / FGSC 987).